The chain runs to 20 residues: Manganese peroxidase H5 (20 aa).

It belongs to the peroxidase family. Ligninase subfamily.

Its subcellular location is the secreted. The enzyme catalyses 2 Mn(2+) + H2O2 + 2 H(+) = 2 Mn(3+) + 2 H2O. Functionally, catalyzes the oxidation of Mn(2+) to Mn(3+). The latter, acting as a diffusible redox mediator, is capable of oxidizing a variety of lignin compounds. The chain is Manganese peroxidase H5 from Phanerodontia chrysosporium (White-rot fungus).